We begin with the raw amino-acid sequence, 374 residues long: Histone acetyltransferase type B catalytic subunit (374 aa).

2 interaction with histone H4 N-terminus regions span residues aspartate 42–glutamate 44 and tyrosine 194–tyrosine 196. Residues valine 135 to glutamate 303 enclose the N-acetyltransferase domain. Residues tryptophan 197 to phenylalanine 205 form an interaction with HAT2 region. Residues phenylalanine 220–isoleucine 222 and glutamine 227–serine 233 each bind acetyl-CoA. Glutamate 255 serves as the catalytic Proton donor/acceptor. Acetyl-CoA-binding residues include asparagine 258 and arginine 267. At serine 354 the chain carries Phosphoserine.

The protein belongs to the HAT1 family. In terms of assembly, component of the HAT-B complex composed of at least HAT1 and HAT2. In the cytoplasm, this complex binds to the histone H4 tail. In the nucleus, the HAT-B complex has an additional component, the histone H3/H4 chaperone HIF1.

The protein localises to the cytoplasm. The protein resides in the nucleus. It carries out the reaction L-lysyl-[protein] + acetyl-CoA = N(6)-acetyl-L-lysyl-[protein] + CoA + H(+). Functionally, catalytic component of the histone acetylase B (HAT-B) complex. Acetylates 'Lys-12' of free histone H4 in the cytoplasm. The complex is also found in the nucleus, however it is not certain that it modifies histone H4 when packaged in chromatin. Histone H4 'Lys-12' acetylation is required for telomeric silencing. Has intrinsic substrate specificity that modifies lysine in recognition sequence GXGKXG. Involved in DNA double-strand break repair. The polypeptide is Histone acetyltransferase type B catalytic subunit (HAT1) (Saccharomyces cerevisiae (strain ATCC 204508 / S288c) (Baker's yeast)).